Consider the following 30-residue polypeptide: Serum amyloid P-component (30 aa).

The Pentraxin (PTX) domain maps to 1–30 (APQDLSGKMFIFPQETSTANVXLTARSQDF).

It belongs to the pentraxin family. Homopentamer. Discoid arrangement of 5 covalently bound subunits. It depends on Ca(2+) as a cofactor.

It is found in the secreted. This chain is Serum amyloid P-component, found in Anarhichas lupus (Atlantic wolffish).